The chain runs to 248 residues: Tyrosine recombinase XerD-like (248 aa).

Positions 1–72 (MKSYIEPFIA…TANQFLYYLY (72 aa)) constitute a Core-binding (CB) domain. One can recognise a Tyr recombinase domain in the interval 85–248 (DTMKVMRTEK…PVTLEKYYKS (164 aa)). Active-site residues include K149 and R213. The active-site O-(3'-phospho-DNA)-tyrosine intermediate is the Y245.

The protein belongs to the 'phage' integrase family. XerD-like subfamily.

Its subcellular location is the cytoplasm. Its function is as follows. Putative tyrosine recombinase. Not involved in the cutting and rejoining of the recombining DNA molecules on dif(SL) site. The chain is Tyrosine recombinase XerD-like from Streptococcus pyogenes serotype M18 (strain MGAS8232).